Here is a 265-residue protein sequence, read N- to C-terminus: 3-methyl-2-oxobutanoate hydroxymethyltransferase (265 aa).

Mg(2+)-binding residues include aspartate 43 and aspartate 82. 3-methyl-2-oxobutanoate-binding positions include 43-44 (DS), aspartate 82, and lysine 111. Residue glutamate 113 participates in Mg(2+) binding. Catalysis depends on glutamate 180, which acts as the Proton acceptor.

It belongs to the PanB family. In terms of assembly, homodecamer; pentamer of dimers. Mg(2+) serves as cofactor.

Its subcellular location is the cytoplasm. The enzyme catalyses 3-methyl-2-oxobutanoate + (6R)-5,10-methylene-5,6,7,8-tetrahydrofolate + H2O = 2-dehydropantoate + (6S)-5,6,7,8-tetrahydrofolate. The protein operates within cofactor biosynthesis; (R)-pantothenate biosynthesis; (R)-pantoate from 3-methyl-2-oxobutanoate: step 1/2. Functionally, catalyzes the reversible reaction in which hydroxymethyl group from 5,10-methylenetetrahydrofolate is transferred onto alpha-ketoisovalerate to form ketopantoate. This is 3-methyl-2-oxobutanoate hydroxymethyltransferase from Francisella tularensis subsp. novicida (strain U112).